We begin with the raw amino-acid sequence, 640 residues long: Threonine--tRNA ligase (640 aa).

In terms of domain architecture, TGS spans 1–61 (MPIITLPNGD…TEDSTLQIIT (61 aa)). The interval 242-533 (DHRKIGKALD…LIEHYAGFMP (292 aa)) is catalytic. Zn(2+)-binding residues include Cys333, His384, and His510.

Belongs to the class-II aminoacyl-tRNA synthetase family. In terms of assembly, homodimer. The cofactor is Zn(2+).

The protein localises to the cytoplasm. The catalysed reaction is tRNA(Thr) + L-threonine + ATP = L-threonyl-tRNA(Thr) + AMP + diphosphate + H(+). Functionally, catalyzes the attachment of threonine to tRNA(Thr) in a two-step reaction: L-threonine is first activated by ATP to form Thr-AMP and then transferred to the acceptor end of tRNA(Thr). Also edits incorrectly charged L-seryl-tRNA(Thr). The protein is Threonine--tRNA ligase of Acinetobacter baumannii (strain AB0057).